The following is a 140-amino-acid chain: ATP synthase epsilon chain (140 aa).

Belongs to the ATPase epsilon chain family. In terms of assembly, F-type ATPases have 2 components, CF(1) - the catalytic core - and CF(0) - the membrane proton channel. CF(1) has five subunits: alpha(3), beta(3), gamma(1), delta(1), epsilon(1). CF(0) has three main subunits: a, b and c.

Its subcellular location is the cell inner membrane. Functionally, produces ATP from ADP in the presence of a proton gradient across the membrane. This Neisseria meningitidis serogroup A / serotype 4A (strain DSM 15465 / Z2491) protein is ATP synthase epsilon chain.